The chain runs to 320 residues: Transmembrane protein 41 homolog (320 aa).

Residues 20-72 (GRAKALQEHSPDQVATPLLPQVPPQEQQDLNPQQQQQQQQQQQATPQKQAMSA) are disordered. Low complexity predominate over residues 43 to 68 (PQEQQDLNPQQQQQQQQQQQATPQKQ). A run of 6 helical transmembrane segments spans residues 83-103 (VIVA…YAIF), 141-161 (VMFG…PGSL), 173-195 (FPIA…YTLS), 225-242 (LFNY…PNWF), 245-265 (LASP…FCGV), and 289-309 (FSWT…LPGL).

Belongs to the TMEM41 family. In embryos, strongly expressed in the nervous system.

Its subcellular location is the membrane. Functionally, required in cholinergic neurons, but not in motor neurons, for normal neurotransmitter release by motor neurons. Involved in muscle growth. In Drosophila melanogaster (Fruit fly), this protein is Transmembrane protein 41 homolog (stas).